We begin with the raw amino-acid sequence, 513 residues long: ATP synthase subunit alpha (513 aa).

Residue 169–176 (GDRQTGKT) coordinates ATP.

This sequence belongs to the ATPase alpha/beta chains family. As to quaternary structure, F-type ATPases have 2 components, CF(1) - the catalytic core - and CF(0) - the membrane proton channel. CF(1) has five subunits: alpha(3), beta(3), gamma(1), delta(1), epsilon(1). CF(0) has three main subunits: a(1), b(2) and c(9-12). The alpha and beta chains form an alternating ring which encloses part of the gamma chain. CF(1) is attached to CF(0) by a central stalk formed by the gamma and epsilon chains, while a peripheral stalk is formed by the delta and b chains.

It is found in the cell inner membrane. The catalysed reaction is ATP + H2O + 4 H(+)(in) = ADP + phosphate + 5 H(+)(out). Produces ATP from ADP in the presence of a proton gradient across the membrane. The alpha chain is a regulatory subunit. This chain is ATP synthase subunit alpha, found in Bordetella avium (strain 197N).